The chain runs to 342 residues: tRNA-specific 2-thiouridylase MnmA (342 aa).

ATP-binding positions include 6 to 13 (LLSGGVDS) and Leu32. Cys92 functions as the Nucleophile in the catalytic mechanism. A disulfide bridge links Cys92 with Cys191. Residue Gly116 coordinates ATP. Positions 138–140 (KDQ) are interaction with tRNA. Residue Cys191 is the Cysteine persulfide intermediate of the active site. Residues 293 to 294 (RY) are interaction with tRNA.

Belongs to the MnmA/TRMU family.

It localises to the cytoplasm. The catalysed reaction is S-sulfanyl-L-cysteinyl-[protein] + uridine(34) in tRNA + AH2 + ATP = 2-thiouridine(34) in tRNA + L-cysteinyl-[protein] + A + AMP + diphosphate + H(+). Catalyzes the 2-thiolation of uridine at the wobble position (U34) of tRNA, leading to the formation of s(2)U34. The protein is tRNA-specific 2-thiouridylase MnmA of Helicobacter pylori (strain HPAG1).